The chain runs to 701 residues: MVETDLMSSHSSNWKEIFRTHSIAQTIQLEKFVSQQIEEKGRELQQNVCFNYQSFIEASENLSNIRNNLEKVLQNSYEFQSMVSLPKVDRVSKFLSDNESISQTSGDYFIFLQRFYAHAILFVMELFNKEQYLQSSKLLIFCLRILPADLPNDHQCHILVNRLESCKNYLNNRLKQAMTSSLSKVSVVTSWILLNQANISSGLDIFLQECEDQLLILNDAREFSLTFLNTLKLARDFPNEIRSYLEASKNFNIFKEKEILRNICLDECYLKAYFSAEDVKVTTPFETLQQFDGDNILQQWKLSFFSKISHSEKSFFSNATSLTTLYQILEGLLSELSEPQFKEFYELWNSILQNHFIISSRNIIDSLGLYVNKIKEKLQICFEIPPTNSFDPWSFQLKQQVLNELKQNILPACGMDDGFQRFWQSLASFDMVLDESLQVLKKLQTLHLSFTLGDIIPNYLTLADYLLNFVKTSFAQIYELVCSFVNNVAVMESSSEKQLRTSRCLKIVRLLKQFRHMDESVPFDDLIYKLQNILVRELTDFTTGIYINESKINLDVAACITGNFFGPSFALYNSLIMLIDKLEVLGFDIVSDKFKGLLTPNLFESLFILNLERLKAAKSMDHMKQNTFDMEFINYLSDFTNNPREVIDYQHFIELIDLHVQDEFSKEDFDTVRANVKECVPKLLSFFTVLLPRVKAQKVIT.

The protein belongs to the COG1 family. As to quaternary structure, component of the conserved oligomeric Golgi (COG) complex which consists of eight different proteins cog1-cog8.

Its subcellular location is the cytoplasm. It is found in the nucleus. The protein resides in the golgi apparatus membrane. In terms of biological role, acts as essential component of the peripheral membrane COG complex that is involved in intra-Golgi protein trafficking. COG is located at the cis-Golgi, and regulates tethering of retrograde intra-Golgi vesicles and possibly a number of other membrane trafficking events. The chain is Conserved oligomeric Golgi complex subunit 1 (cog1) from Schizosaccharomyces pombe (strain 972 / ATCC 24843) (Fission yeast).